Consider the following 464-residue polypeptide: Keratin, type I cytoskeletal 28 (464 aa).

The head stretch occupies residues 1–85 (MSLRFSSGSR…GSEGGLFSGN (85 aa)). A coil 1A region spans residues 86–121 (EKVTMQNLNDRLASYLDNVRALEEANAELERKIKSW). The IF rod domain occupies 86–401 (EKVTMQNLND…RLIDGDRNSC (316 aa)). A linker 1 region spans residues 122–143 (YEKHGPGSCHGLDHDYSRYHLT). The coil 1B stretch occupies residues 144–235 (IEDLKNKIIS…KNHEEEVKAL (92 aa)). The segment at 236–258 (QCVAGGNVNVEMNAAPGVDLTLL) is linker 12. The interval 259–397 (LNNMRAEYED…ETYCRLIDGD (139 aa)) is coil 2. Residues 398 to 464 (RNSCSKSKGF…NGKTKQRVPF (67 aa)) are tail. Positions 402-417 (SKSKGFGSGSPGNSSK) are enriched in low complexity. Disordered stretches follow at residues 402–422 (SKSKGFGSGSPGNSSKDLSRT) and 440–464 (SSRVQSIEEKTSKMTNGKTKQRVPF).

It belongs to the intermediate filament family. In terms of assembly, heterotetramer of two type I and two type II keratins.

The protein localises to the cytoplasm. Functionally, essential for the proper assembly of types I and II keratin protein complexes and the formation of keratin intermediate filaments in the inner root sheath (irs). This Bos taurus (Bovine) protein is Keratin, type I cytoskeletal 28.